Consider the following 59-residue polypeptide: Large ribosomal subunit protein uL30 (59 aa).

The protein belongs to the universal ribosomal protein uL30 family. In terms of assembly, part of the 50S ribosomal subunit.

This is Large ribosomal subunit protein uL30 from Staphylococcus epidermidis (strain ATCC 12228 / FDA PCI 1200).